The sequence spans 142 residues: Nucleoside diphosphate kinase (142 aa).

Residues K11, F59, R87, T93, R104, and N114 each coordinate ATP. H117 serves as the catalytic Pros-phosphohistidine intermediate.

It belongs to the NDK family. In terms of assembly, homotetramer. Mg(2+) is required as a cofactor.

The protein localises to the cytoplasm. The enzyme catalyses a 2'-deoxyribonucleoside 5'-diphosphate + ATP = a 2'-deoxyribonucleoside 5'-triphosphate + ADP. The catalysed reaction is a ribonucleoside 5'-diphosphate + ATP = a ribonucleoside 5'-triphosphate + ADP. Functionally, major role in the synthesis of nucleoside triphosphates other than ATP. The ATP gamma phosphate is transferred to the NDP beta phosphate via a ping-pong mechanism, using a phosphorylated active-site intermediate. The chain is Nucleoside diphosphate kinase from Aeromonas salmonicida (strain A449).